A 289-amino-acid chain; its full sequence is Glycine--tRNA ligase alpha subunit (289 aa).

This sequence belongs to the class-II aminoacyl-tRNA synthetase family. Tetramer of two alpha and two beta subunits.

The protein localises to the cytoplasm. It carries out the reaction tRNA(Gly) + glycine + ATP = glycyl-tRNA(Gly) + AMP + diphosphate. This is Glycine--tRNA ligase alpha subunit (glyQ) from Rickettsia prowazekii (strain Madrid E).